The primary structure comprises 634 residues: Kelch-like protein 22 (634 aa).

Alanine 2 is subject to N-acetylalanine. The BTB domain maps to 50–117 (FDVVLVVEGR…IYTSELELSL (68 aa)). Kelch repeat units lie at residues 299-349 (CVVG…VLNN), 350-399 (FVYL…VVGR), 400-446 (YIYA…TLEG), 448-493 (MYIT…TLLN), 494-544 (KLYV…VLDN), and 545-593 (RIYV…VLTL). At threonine 463 the chain carries Phosphothreonine. Tyrosine 466 bears the Phosphotyrosine mark. Threonine 475 bears the Phosphothreonine mark. Residues 600–634 (EPPRGTPDRSQADPDFASEVMSVSDWEEFDNSSED) are disordered. At threonine 605 the chain carries Phosphothreonine. Residues 624–634 (DWEEFDNSSED) show a composition bias toward acidic residues.

As to quaternary structure, component of the BCR(KLHL22) E3 ubiquitin ligase complex, at least composed of CUL3, KLHL22 and RBX1. Interacts with PLK1. Interacts with DEPDC5 (via DEP domain); the interaction depends on amino acid availability. Interacts with YWHAE; required for the nuclear localization of KLHL22 upon amino acid starvation.

It localises to the cytoplasm. It is found in the cytosol. The protein localises to the cytoskeleton. Its subcellular location is the microtubule organizing center. The protein resides in the centrosome. It localises to the spindle. It is found in the nucleus. The protein localises to the lysosome. The protein operates within protein modification; protein ubiquitination. In terms of biological role, substrate-specific adapter of a BCR (BTB-CUL3-RBX1) E3 ubiquitin ligase complex required for chromosome alignment and localization of PLK1 at kinetochores. The BCR(KLHL22) ubiquitin ligase complex mediates monoubiquitination of PLK1, leading to PLK1 dissociation from phosphoreceptor proteins and subsequent removal from kinetochores, allowing silencing of the spindle assembly checkpoint (SAC) and chromosome segregation. Monoubiquitination of PLK1 does not lead to PLK1 degradation. The BCR(KLHL22) ubiquitin ligase complex is also responsible for the amino acid-stimulated 'Lys-48' polyubiquitination and proteasomal degradation of DEPDC5. Through the degradation of DEPDC5, releases the GATOR1 complex-mediated inhibition of the TORC1 pathway. It is therefore an amino acid-dependent activator within the amino acid-sensing branch of the TORC1 pathway, indirectly regulating different cellular processes including cell growth and autophagy. The sequence is that of Kelch-like protein 22 from Homo sapiens (Human).